The sequence spans 425 residues: UDP-N-acetylglucosamine 1-carboxyvinyltransferase (425 aa).

23 to 24 (KN) is a phosphoenolpyruvate binding site. Arg-100 serves as a coordination point for UDP-N-acetyl-alpha-D-glucosamine. Cys-124 (proton donor) is an active-site residue. Cys-124 is subject to 2-(S-cysteinyl)pyruvic acid O-phosphothioketal. Positions 313 and 335 each coordinate UDP-N-acetyl-alpha-D-glucosamine.

Belongs to the EPSP synthase family. MurA subfamily.

Its subcellular location is the cytoplasm. It catalyses the reaction phosphoenolpyruvate + UDP-N-acetyl-alpha-D-glucosamine = UDP-N-acetyl-3-O-(1-carboxyvinyl)-alpha-D-glucosamine + phosphate. It functions in the pathway cell wall biogenesis; peptidoglycan biosynthesis. Its function is as follows. Cell wall formation. Adds enolpyruvyl to UDP-N-acetylglucosamine. The protein is UDP-N-acetylglucosamine 1-carboxyvinyltransferase of Wolbachia sp. subsp. Drosophila simulans (strain wRi).